Here is a 257-residue protein sequence, read N- to C-terminus: Phosphate import ATP-binding protein PstB (257 aa).

The ABC transporter domain occupies 4–246 (LKLNDVNIYY…KKIFENPDQK (243 aa)). 36–43 (GPSGCGKS) provides a ligand contact to ATP.

It belongs to the ABC transporter superfamily. Phosphate importer (TC 3.A.1.7) family. As to quaternary structure, the complex is composed of two ATP-binding proteins (PstB), two transmembrane proteins (PstC and PstA) and a solute-binding protein (PstS).

It localises to the cell membrane. It carries out the reaction phosphate(out) + ATP + H2O = ADP + 2 phosphate(in) + H(+). Functionally, part of the ABC transporter complex PstSACB involved in phosphate import. Responsible for energy coupling to the transport system. This chain is Phosphate import ATP-binding protein PstB, found in Corynebacterium glutamicum (strain ATCC 13032 / DSM 20300 / JCM 1318 / BCRC 11384 / CCUG 27702 / LMG 3730 / NBRC 12168 / NCIMB 10025 / NRRL B-2784 / 534).